We begin with the raw amino-acid sequence, 560 residues long: Beta-glucosidase 26, peroxisomal (560 aa).

A beta-D-glucoside is bound by residues glutamine 33, histidine 137, 182–183 (NE), tyrosine 326, glutamate 398, tryptophan 450, 457–458 (EW), and tyrosine 466. Glutamate 183 (proton donor) is an active-site residue. Glutamate 398 (nucleophile) is an active-site residue.

This sequence belongs to the glycosyl hydrolase 1 family.

The protein resides in the peroxisome. The catalysed reaction is Hydrolysis of terminal, non-reducing beta-D-glucosyl residues with release of beta-D-glucose.. In terms of biological role, possesses beta-glucosidase activity toward 4-methyl-umbelliferyl-beta-D-glucoside in vitro. Possesses myrosinase activity toward indol-3-yl-methylglucosinolate (I3M) and 4-methoxy-indol-3-yl-methylglucosinolate (4MO-I3M) in vivo. Component of an inducible preinvasion resistance mechanism that prevents penetration of the nonhost fungal species B.graminis and E.pisi. Involved in indole glucosinolate (IGS) activation during pattern-triggered immunity (PTI). Functions as a myrosinase for the breakdown of flg22-triggered IGS. Required for both callose deposition and glucosinolate activation during pathogen-triggered resistance. During fungal attack, required for IGS activation that mediates broad-spectrum antifungal defense. The protein is Beta-glucosidase 26, peroxisomal of Arabidopsis thaliana (Mouse-ear cress).